Reading from the N-terminus, the 807-residue chain is Shutoff protein (807 aa).

A disordered region spans residues 1–88; the sequence is MESVEKKDSL…QVGRGDERHG (88 aa). The span at 16–29 shows a compositional bias: polar residues; the sequence is FATTASTDAANAPT. 2 stretches are compositionally biased toward basic and acidic residues: residues 59–70 and 79–88; these read RSVPTEDKKQDQ and QVGRGDERHG. The segment at 280-345 is binding to host EIF4G; the sequence is VMSELIVRRA…AVLVTVELEC (66 aa). The RRM domain maps to 348-466; the sequence is RFFADPEMQR…DLWTAFNERS (119 aa). A phosphotyrosine; by host mark is found at tyrosine 365 and tyrosine 682. The tract at residues 684–807 is disordered; it reads DPQSGEELNP…AGTARSPTQP (124 aa). Positions 726–743 are enriched in gly residues; that stretch reads GRGGILGQSGRGGFGRGG. Over residues 744-755 the composition is skewed to basic and acidic residues; that stretch reads GGHDGRLGEPRR. Residues 756 to 765 are compositionally biased toward basic residues; the sequence is GSFRGRRGVR.

It belongs to the adenoviridae shutoff protein family. Monomer. Interacts with hexon protein; this interaction allows chaperoning and trimerization of hexon proteins. Interacts (via N-terminus) with host initiation factor EIF4G (via C-terminus). Interacts (via RRM domain) with viral mRNAs that contain the tripartite leader; this interaction allows ribosome shunting and expression of viral late mRNAs. In terms of processing, might be cleaved by the viral protease. Post-translationally, phosphorylated. Tyrosine phosphorylation enhances preferential binding to tripartite leader mRNAs and allows ribosome shunting. Methylated. Asymmetric dimethylation by host PRMT1 of the Arg/Gly-rich region may regulate shutoff protein binding to hexon and promote the capsid assembly in the nucleus.

The protein localises to the host cytoplasm. Protein that inhibits host translation while promoting late viral translation by ribosome shunting. Blocks host cap-dependent translation by binding to eIF4G, displacing MKNK1 from cap initiation complexes and preventing EIF4E phosphorylation. Binds to the tripartite leader sequence of viral late mRNAs and recruits host eIF4G, PABPC1/poly-A binding protein and 40S ribosomes subunits on viral mRNAs, allowing ribosome shunting and efficient translation of late viral mRNAs even though conventional translation via ribosome scanning from the cap has been shut off in the host cell. During assembly, acts as a chaperone protein that helps hexon proteins assembly into trimers. The chain is Shutoff protein from Homo sapiens (Human).